The sequence spans 126 residues: DNA-directed RNA polymerase subunit omega (126 aa).

Belongs to the RNA polymerase subunit omega family. As to quaternary structure, the RNAP catalytic core consists of 2 alpha, 1 beta, 1 beta' and 1 omega subunit. When a sigma factor is associated with the core the holoenzyme is formed, which can initiate transcription.

The enzyme catalyses RNA(n) + a ribonucleoside 5'-triphosphate = RNA(n+1) + diphosphate. In terms of biological role, promotes RNA polymerase assembly. Latches the N- and C-terminal regions of the beta' subunit thereby facilitating its interaction with the beta and alpha subunits. This is DNA-directed RNA polymerase subunit omega from Paramagnetospirillum magneticum (strain ATCC 700264 / AMB-1) (Magnetospirillum magneticum).